The chain runs to 599 residues: MKNIRNFSIIAHIDHGKSTLSDRIIQICGGLSDREMEAQVLDSMDLERERGITIKAQSVTLDYKASDGETYQLNFIDTPGHVDFSYEVSRSLAACEGALLVVDAGQGVEAQTLANCYTAMEMDLEVVPVLNKIDLPAADPERVAEEIEDIVGIDATEAVRCSAKTGVGVQDVLERLVRDIPPPEGDPEGPLQALIIDSWFDNYLGVVSLIRIKNGTLRKGDKVKVMSTGQTYNADRLGIFTPKQVDRTELKCGEVGWLVCAIKDIHGAPVGDTLTLARNPAEKALPGFKKVKPQVYAGLFPVSSDDYEAFRDALGKLSLNDASLFYEPESSSALGFGFRCGFLGLLHMEIIQERLEREYDLDLITTAPTVVYEVETTSREVIYVDSPSKLPAVNNIYELREPIAECHMLLPQAYLGNVITLCVEKRGVQTNMVYHGNQVALTYEIPMAEVVLDFFDRLKSTSRGYASLDYNFKRFQASDMVRVDVLINGERVDALALITHRDNSQNRGRELVEKMKDLIPRQQFDIAIQAAIGTHIIARSTVKQLRKNVLAKCYGGDISRKKKLLQKQKEGKKRMKQIGNVELPQEAFLAILHVGKDNK.

The tr-type G domain occupies 2 to 184 (KNIRNFSIIA…RLVRDIPPPE (183 aa)). GTP contacts are provided by residues 14–19 (DHGKST) and 131–134 (NKID).

The protein belongs to the TRAFAC class translation factor GTPase superfamily. Classic translation factor GTPase family. LepA subfamily.

The protein resides in the cell inner membrane. It carries out the reaction GTP + H2O = GDP + phosphate + H(+). Its function is as follows. Required for accurate and efficient protein synthesis under certain stress conditions. May act as a fidelity factor of the translation reaction, by catalyzing a one-codon backward translocation of tRNAs on improperly translocated ribosomes. Back-translocation proceeds from a post-translocation (POST) complex to a pre-translocation (PRE) complex, thus giving elongation factor G a second chance to translocate the tRNAs correctly. Binds to ribosomes in a GTP-dependent manner. This is Elongation factor 4 from Escherichia coli O8 (strain IAI1).